Consider the following 201-residue polypeptide: Small ribosomal subunit protein uS4c (201 aa).

The S4 RNA-binding domain maps to 91–153 (MRLDNIVFRL…NASKKIVETN (63 aa)).

This sequence belongs to the universal ribosomal protein uS4 family. As to quaternary structure, part of the 30S ribosomal subunit. Contacts protein S5. The interaction surface between S4 and S5 is involved in control of translational fidelity.

It is found in the plastid. The protein localises to the cyanelle. Functionally, one of the primary rRNA binding proteins, it binds directly to 16S rRNA where it nucleates assembly of the body of the 30S subunit. With S5 and S12 plays an important role in translational accuracy. The protein is Small ribosomal subunit protein uS4c (rps4) of Cyanophora paradoxa.